A 492-amino-acid polypeptide reads, in one-letter code: GTPase Der (492 aa).

EngA-type G domains are found at residues 3–167 and 207–382; these read FTLA…EKFE and LQVA…DVWN. GTP-binding positions include 9-16, 56-60, 119-122, 213-220, 260-264, and 325-328; these read GRPNVGKS, DSAGL, NKSE, GRPNAGKS, DTAGM, and NKWD. The KH-like domain occupies 383–469; sequence RRVPTAALNR…RLTLRGQGDK (87 aa). The interval 461 to 492 is disordered; that stretch reads LTLRGQGDKNPYKGKKKSTPSRLRKHLEGRKS. Residues 472–492 show a composition bias toward basic residues; that stretch reads YKGKKKSTPSRLRKHLEGRKS.

Belongs to the TRAFAC class TrmE-Era-EngA-EngB-Septin-like GTPase superfamily. EngA (Der) GTPase family. As to quaternary structure, associates with the 50S ribosomal subunit.

Functionally, GTPase that plays an essential role in the late steps of ribosome biogenesis. This is GTPase Der from Ruegeria sp. (strain TM1040) (Silicibacter sp.).